The primary structure comprises 557 residues: CTP synthase (557 aa).

The amidoligase domain stretch occupies residues 1–272 (MARSKIVKHI…DSLVLKKLML (272 aa)). Ser18 is a CTP binding site. Ser18 lines the UTP pocket. 19-24 (SLGKGI) is a binding site for ATP. Tyr59 serves as a coordination point for L-glutamine. Asp76 lines the ATP pocket. The Mg(2+) site is built by Asp76 and Glu146. Residues 153–155 (DIE), 193–198 (KTKPTQ), and Lys229 each bind CTP. UTP-binding positions include 193 to 198 (KTKPTQ) and Lys229. The Glutamine amidotransferase type-1 domain occupies 299–543 (EIGVCGKYTK…VAEAKKFRDE (245 aa)). Position 363 (Gly363) interacts with L-glutamine. Cys390 acts as the Nucleophile; for glutamine hydrolysis in catalysis. Residues 391–394 (LGMQ), Glu414, and Arg471 contribute to the L-glutamine site. Active-site residues include His516 and Glu518.

Belongs to the CTP synthase family. Homotetramer.

It carries out the reaction UTP + L-glutamine + ATP + H2O = CTP + L-glutamate + ADP + phosphate + 2 H(+). The enzyme catalyses L-glutamine + H2O = L-glutamate + NH4(+). The catalysed reaction is UTP + NH4(+) + ATP = CTP + ADP + phosphate + 2 H(+). The protein operates within pyrimidine metabolism; CTP biosynthesis via de novo pathway; CTP from UDP: step 2/2. Its activity is regulated as follows. Allosterically activated by GTP, when glutamine is the substrate; GTP has no effect on the reaction when ammonia is the substrate. The allosteric effector GTP functions by stabilizing the protein conformation that binds the tetrahedral intermediate(s) formed during glutamine hydrolysis. Inhibited by the product CTP, via allosteric rather than competitive inhibition. Catalyzes the ATP-dependent amination of UTP to CTP with either L-glutamine or ammonia as the source of nitrogen. Regulates intracellular CTP levels through interactions with the four ribonucleotide triphosphates. The chain is CTP synthase from Chloroherpeton thalassium (strain ATCC 35110 / GB-78).